Consider the following 139-residue polypeptide: Small ribosomal subunit protein uS12 (139 aa).

A disordered region spans residues 1-21; the sequence is MSTVSQLIKKRRSSKTSKTKA. Residues 8-18 are compositionally biased toward basic residues; sequence IKKRRSSKTSK. 3-methylthioaspartic acid is present on Asp102.

It belongs to the universal ribosomal protein uS12 family. As to quaternary structure, part of the 30S ribosomal subunit. Contacts proteins S8 and S17. May interact with IF1 in the 30S initiation complex.

In terms of biological role, with S4 and S5 plays an important role in translational accuracy. Interacts with and stabilizes bases of the 16S rRNA that are involved in tRNA selection in the A site and with the mRNA backbone. Located at the interface of the 30S and 50S subunits, it traverses the body of the 30S subunit contacting proteins on the other side and probably holding the rRNA structure together. The combined cluster of proteins S8, S12 and S17 appears to hold together the shoulder and platform of the 30S subunit. The protein is Small ribosomal subunit protein uS12 of Aster yellows witches'-broom phytoplasma (strain AYWB).